The chain runs to 208 residues: Small ribosomal subunit protein uS5 (208 aa).

Positions 48–111 (LEDEVLDINM…DAAKLDITYI (64 aa)) constitute an S5 DRBM domain.

It belongs to the universal ribosomal protein uS5 family. As to quaternary structure, part of the 30S ribosomal subunit. Contacts protein S4.

Its function is as follows. With S4 and S12 plays an important role in translational accuracy. This chain is Small ribosomal subunit protein uS5, found in Methanosarcina barkeri (strain Fusaro / DSM 804).